The chain runs to 473 residues: Exodeoxyribonuclease I (473 aa).

The region spanning 9-188 (IYDYESFGVN…AMADVYATIA (180 aa)) is the Exonuclease domain. Mg(2+) is bound by residues Asp-11, Glu-13, and Asp-182. Position 13 (Glu-13) interacts with substrate. Residues 198–353 (PKLFQYFFEN…KVADIFNEER (156 aa)) enclose the ExoI SH3-like domain. Positions 356–472 (ASNDNVETEL…QVYEYGIKLL (117 aa)) constitute an ExoI C-terminal domain.

Monomer. Interacts with ssb (via C-terminus); this interaction stimulates the exonuclease activity by recruiting the enzyme to its substrate. Mg(2+) is required as a cofactor.

The catalysed reaction is Exonucleolytic cleavage in the 3'- to 5'-direction to yield nucleoside 5'-phosphates.. Its function is as follows. Degrades single-stranded DNA (ssDNA) in a highly processive manner. Also functions as a DNA deoxyribophosphodiesterase that releases deoxyribose-phosphate moieties following the cleavage of DNA at an apurinic/apyrimidinic (AP) site by either an AP endonuclease or AP lyase. Involved in genome maintenance but probably not in phase variation, which contributes to the virulence and disease. The polypeptide is Exodeoxyribonuclease I (sbcB) (Haemophilus influenzae (strain ATCC 51907 / DSM 11121 / KW20 / Rd)).